A 400-amino-acid polypeptide reads, in one-letter code: Large envelope protein (400 aa).

N-acetylmethionine is present on M1. Disordered regions lie at residues 1 to 64 (MGGW…GAFG), 85 to 118 (LTTV…SHPQ), and 143 to 174 (PGGS…PAPN). The N-myristoyl glycine; by host moiety is linked to residue G2. Residues 2–119 (GGWSSKPRQG…PPLRDSHPQA (118 aa)) are pre-S1. Positions 2–174 (GGWSSKPRQG…SSRTGDPAPN (173 aa)) are pre-S. The Virion surface; in external conformation portion of the chain corresponds to 2–181 (GGWSSKPRQG…APNMESTTSG (180 aa)). Residues 2-253 (GGWSSKPRQG…PGYRWMCLRR (252 aa)) are Intravirion; in internal conformation-facing. W4 carries N-linked (GlcNAc...) asparagine glycosylation. Residues 96–106 (STNRQSGRQPT) show a composition bias toward polar residues. Positions 120–174 (MQWNSTTFHQVLLDPRVRGLYFPPGGSSSGTVNPVPTTASPISSISSRTGDPAPN) are pre-S2. Positions 155-166 (PTTASPISSISS) are enriched in low complexity. Residues 182–202 (FLGPLLVLQAGFFLLTRILTI) form a helical membrane-spanning segment. Residues 203-253 (PQSLDSWWTSLNFLGGAPTCPGQNSQSPTSNHSPTSCPPICPGYRWMCLRR) lie on the Intravirion; in external conformation side of the membrane. The chain crosses the membrane as a helical span at residues 254 to 274 (FIIFLFILLLCLIFLLVLLDY). At 275-348 (QGMLPVCPLL…GASVRFSWLS (74 aa)) the chain is on the virion surface side. The N-linked (GlcNAc...) asparagine; by host glycan is linked to N320. Residues 349-369 (LLVPFVQWFVGLSPTVWLSVI) form a helical membrane-spanning segment. At 370–375 (WMMWYW) the chain is on the intravirion side. Residues 376–398 (GPSLYNILSPFLPLLPIFFCLWV) form a helical membrane-spanning segment. Residues 399–400 (YI) are Virion surface-facing.

It belongs to the orthohepadnavirus major surface antigen family. As to quaternary structure, in its internal form (Li-HBsAg), interacts with the capsid protein and with the isoform S. Interacts with host chaperone CANX. Associates with host chaperone CANX through its pre-S2 N glycan; this association may be essential for isoform M proper secretion. In terms of assembly, interacts with isoform L. Interacts with the antigens of satellite virus HDV (HDVAgs); this interaction is required for encapsidation of HDV genomic RNA. In terms of processing, isoform M is N-terminally acetylated by host at a ratio of 90%, and N-glycosylated by host at the pre-S2 region. Post-translationally, myristoylated.

The protein localises to the virion membrane. In terms of biological role, the large envelope protein exists in two topological conformations, one which is termed 'external' or Le-HBsAg and the other 'internal' or Li-HBsAg. In its external conformation the protein attaches the virus to cell receptors and thereby initiating infection. This interaction determines the species specificity and liver tropism. This attachment induces virion internalization predominantly through caveolin-mediated endocytosis. The large envelope protein also assures fusion between virion membrane and endosomal membrane. In its internal conformation the protein plays a role in virion morphogenesis and mediates the contact with the nucleocapsid like a matrix protein. Its function is as follows. The middle envelope protein plays an important role in the budding of the virion. It is involved in the induction of budding in a nucleocapsid independent way. In this process the majority of envelope proteins bud to form subviral lipoprotein particles of 22 nm of diameter that do not contain a nucleocapsid. The protein is Large envelope protein of Homo sapiens (Human).